Reading from the N-terminus, the 348-residue chain is SUMO-activating enzyme subunit 1 (348 aa).

Belongs to the ubiquitin-activating E1 family. In terms of assembly, heterodimer of sae1 and uba2/sae2. The heterodimer corresponds to the two domains that are encoded on a single polypeptide chain in ubiquitin-activating enzyme E1. Interacts with ube2i.

The protein resides in the nucleus. The protein operates within protein modification; protein sumoylation. The heterodimer acts as an E1 ligase for sumo1, sumo2, and sumo3. It mediates ATP-dependent activation of sumo proteins followed by formation of a thioester bond between a sumo protein and a conserved active site cysteine residue on uba2/sae2. This chain is SUMO-activating enzyme subunit 1 (sae1), found in Danio rerio (Zebrafish).